Consider the following 710-residue polypeptide: Chaperonin-containing T-complex member BBS12 (710 aa).

Belongs to the TCP-1 chaperonin family. BBS12 subfamily. Component of the chaperonin-containing T-complex (TRiC), a heterooligomeric complex of about 850 to 900 kDa that forms two stacked rings, 12 to 16 nm in diameter. Interacts with MKKS.

It localises to the cell projection. Its subcellular location is the cilium. Component of the chaperonin-containing T-complex (TRiC), a molecular chaperone complex that assists the folding of proteins upon ATP hydrolysis. As part of the TRiC complex may play a role in the assembly of BBSome, a complex involved in ciliogenesis regulating transports vesicles to the cilia. Involved in adipogenic differentiation. The protein is Chaperonin-containing T-complex member BBS12 (BBS12) of Homo sapiens (Human).